Reading from the N-terminus, the 304-residue chain is Acetaldehyde dehydrogenase 1 (304 aa).

C131 acts as the Acyl-thioester intermediate in catalysis. NAD(+)-binding positions include 162 to 170 (SAGPGTRKN) and N273.

This sequence belongs to the acetaldehyde dehydrogenase family.

The catalysed reaction is acetaldehyde + NAD(+) + CoA = acetyl-CoA + NADH + H(+). This is Acetaldehyde dehydrogenase 1 from Dechloromonas aromatica (strain RCB).